The chain runs to 294 residues: Ribosomal RNA small subunit methyltransferase A (294 aa).

Residues N29, V31, G56, E77, D107, and N126 each contribute to the S-adenosyl-L-methionine site.

Belongs to the class I-like SAM-binding methyltransferase superfamily. rRNA adenine N(6)-methyltransferase family. RsmA subfamily.

Its subcellular location is the cytoplasm. It catalyses the reaction adenosine(1518)/adenosine(1519) in 16S rRNA + 4 S-adenosyl-L-methionine = N(6)-dimethyladenosine(1518)/N(6)-dimethyladenosine(1519) in 16S rRNA + 4 S-adenosyl-L-homocysteine + 4 H(+). Functionally, specifically dimethylates two adjacent adenosines (A1518 and A1519) in the loop of a conserved hairpin near the 3'-end of 16S rRNA in the 30S particle. May play a critical role in biogenesis of 30S subunits. This is Ribosomal RNA small subunit methyltransferase A from Mycobacterium sp. (strain JLS).